The sequence spans 140 residues: MITINQITDRKARGPKKKRKTLLTGYPQKKGYCMRVYETKPKKPNSAIRKVAKVTIKLKNKRKNLIAYIPGFGPHNLQPLSTVLVKGGRCQDLPGVKYRLVRKHYDFLAAERFVRKNRRSKFSVKNLETKAKKGKAVRIE.

Belongs to the universal ribosomal protein uS12 family.

It localises to the mitochondrion. This is Small ribosomal subunit protein uS12m (mrps12) from Dictyostelium discoideum (Social amoeba).